A 224-amino-acid chain; its full sequence is Putative cobalt transport protein CbiM (224 aa).

6 consecutive transmembrane segments (helical) span residues 8 to 28, 41 to 61, 75 to 95, 108 to 128, 138 to 158, and 169 to 189; these read LPPL…VYGI, AMPM…LKMP, FGAV…VLVF, LGAN…AVWL, EIAM…VTAI, and FFTA…PLAI.

The protein belongs to the CbiM family. As to quaternary structure, forms an energy-coupling factor (ECF) transporter complex composed of an ATP-binding protein (A component, CbiO), a transmembrane protein (T component, CbiQ) and 2 possible substrate-capture proteins (S components, CbiM and CbiN) of unknown stoichimetry.

The protein localises to the cell membrane. It functions in the pathway cofactor biosynthesis; adenosylcobalamin biosynthesis. Functionally, part of the energy-coupling factor (ECF) transporter complex CbiMNOQ involved in cobalt import. The chain is Putative cobalt transport protein CbiM from Methanosphaera stadtmanae (strain ATCC 43021 / DSM 3091 / JCM 11832 / MCB-3).